The following is a 264-amino-acid chain: Indole-3-glycerol phosphate synthase (264 aa).

It belongs to the TrpC family.

The catalysed reaction is 1-(2-carboxyphenylamino)-1-deoxy-D-ribulose 5-phosphate + H(+) = (1S,2R)-1-C-(indol-3-yl)glycerol 3-phosphate + CO2 + H2O. Its pathway is amino-acid biosynthesis; L-tryptophan biosynthesis; L-tryptophan from chorismate: step 4/5. The polypeptide is Indole-3-glycerol phosphate synthase (Polaromonas sp. (strain JS666 / ATCC BAA-500)).